The sequence spans 148 residues: UPF0179 protein Mboo_1959 (148 aa).

Belongs to the UPF0179 family.

This chain is UPF0179 protein Mboo_1959, found in Methanoregula boonei (strain DSM 21154 / JCM 14090 / 6A8).